A 157-amino-acid chain; its full sequence is Transcriptional repressor NrdR (157 aa).

Residues 1-26 (MRCPKCGGSKSSVIDSRQAEDGNTIR) are disordered. The segment at 3–34 (CPKCGGSKSSVIDSRQAEDGNTIRRRRECEDC) is a zinc-finger region. A compositionally biased stretch (basic and acidic residues) spans 17 to 26 (RQAEDGNTIR). Positions 49-139 (LVVVKKDGTR…VYRSFKDVGE (91 aa)) constitute an ATP-cone domain.

This sequence belongs to the NrdR family. Zn(2+) is required as a cofactor.

Its function is as follows. Negatively regulates transcription of bacterial ribonucleotide reductase nrd genes and operons by binding to NrdR-boxes. The polypeptide is Transcriptional repressor NrdR (Streptococcus gordonii (strain Challis / ATCC 35105 / BCRC 15272 / CH1 / DL1 / V288)).